The following is a 461-amino-acid chain: Chromosomal replication initiator protein DnaA (461 aa).

Positions 1 to 68 are domain I, interacts with DnaA modulators; the sequence is MINAWAQIEH…EKAAASVLGS (68 aa). A domain II region spans residues 68-118; the sequence is SVPTITVVSGEEPAAAPRPVQVPAQKRPAAARTSGAEQMGLPLHYASRSAD. Positions 119–336 are domain III, AAA+ region; it reads SIKWMHSFDE…SCLRNLLLKA (218 aa). Residues Gly162, Gly164, Lys165, and Thr166 each contribute to the ATP site. The domain IV, binds dsDNA stretch occupies residues 337-461; the sequence is RLLNQQITMD…VERNGRIIHP (125 aa).

It belongs to the DnaA family. As to quaternary structure, oligomerizes as a right-handed, spiral filament on DNA at oriC.

It localises to the cytoplasm. In terms of biological role, plays an essential role in the initiation and regulation of chromosomal replication. ATP-DnaA binds to the origin of replication (oriC) to initiate formation of the DNA replication initiation complex once per cell cycle. Binds the DnaA box (a 9 base pair repeat at the origin) and separates the double-stranded (ds)DNA. Forms a right-handed helical filament on oriC DNA; dsDNA binds to the exterior of the filament while single-stranded (ss)DNA is stabiized in the filament's interior. The ATP-DnaA-oriC complex binds and stabilizes one strand of the AT-rich DNA unwinding element (DUE), permitting loading of DNA polymerase. After initiation quickly degrades to an ADP-DnaA complex that is not apt for DNA replication. Binds acidic phospholipids. This Oleidesulfovibrio alaskensis (strain ATCC BAA-1058 / DSM 17464 / G20) (Desulfovibrio alaskensis) protein is Chromosomal replication initiator protein DnaA.